Consider the following 738-residue polypeptide: Flowering time control protein FCA (738 aa).

Residues 1 to 118 (MHRGGDRSTD…RGDHSDHDNR (118 aa)) are disordered. 2 stretches are compositionally biased toward gly residues: residues 52–70 (RGGG…GGGR) and 81–98 (SGGG…GEPG). The segment covering 109-118 (RGDHSDHDNR) has biased composition (basic and acidic residues). 2 RRM domains span residues 122 to 203 (VKLF…YADG) and 213 to 293 (HKLF…FADP). Disordered regions lie at residues 292-451 (DPKR…PAQQ) and 566-595 (QQSN…IIPS). Gly residues predominate over residues 301–311 (SRGGPAFGGPG). Residues 342–358 (HPSSPRSAPHQFNNFGS) are compositionally biased toward polar residues. Over residues 368 to 377 (TVTSTTDTAT) the composition is skewed to low complexity. Polar residues predominate over residues 383 to 401 (FSGNGSLSSQTAVPSSSHM). Low complexity predominate over residues 435 to 451 (QLQNNQQGQPLQGPAQQ). Residues 575–595 (PTQGQPVQSSNPGAPNAIIPS) show a composition bias toward polar residues. A WW domain is found at 609–642 (VPLTCNWTEHTSPEGFKYYYNSITRESKWDKPEE). Residues 670-738 (MQQLQSPPQA…QSAQERAWKS (69 aa)) form a disordered region. Low complexity predominate over residues 683–706 (PAMQPVQQIPQAQQGQQQMQMKQQ). The segment covering 723–732 (RIQQGIQSAQ) has biased composition (polar residues).

In terms of assembly, interacts with FY. Binds to SF1, FIK, RPRD1B, OsI_31983 and MADS8.

The protein resides in the nucleus. In terms of biological role, plays a major role in the promotion of the transition of the vegetative meristem to reproductive development. Required for RNA-mediated chromatin silencing of a range of loci in the genome. Cotranscriptionally recognizes aberrant RNA and marks it for silencing. Controls alternative cleavage and polyadenylation on pre-mRNAs and antisense RNAs. Regulates flowering time, seed size and cell volume, probably via the modulation of cell size. This is Flowering time control protein FCA from Oryza sativa subsp. indica (Rice).